A 322-amino-acid polypeptide reads, in one-letter code: Fructose-1,6-bisphosphatase class 1 1 (322 aa).

Mg(2+) is bound by residues glutamate 84, aspartate 103, leucine 105, and aspartate 106. Substrate-binding positions include 106–109 (DGSS), asparagine 198, and lysine 264. A Mg(2+)-binding site is contributed by glutamate 270.

It belongs to the FBPase class 1 family. Homotetramer. It depends on Mg(2+) as a cofactor.

The protein localises to the cytoplasm. The enzyme catalyses beta-D-fructose 1,6-bisphosphate + H2O = beta-D-fructose 6-phosphate + phosphate. It functions in the pathway carbohydrate biosynthesis; gluconeogenesis. The chain is Fructose-1,6-bisphosphatase class 1 1 from Pseudoalteromonas translucida (strain TAC 125).